The following is a 231-amino-acid chain: Ion-translocating oxidoreductase complex subunit E (231 aa).

The next 6 helical transmembrane spans lie at G18 to A38, L39 to V59, I69 to A89, G93 to G113, A128 to G148, and P182 to G202.

The protein belongs to the NqrDE/RnfAE family. In terms of assembly, the complex is composed of six subunits: RnfA, RnfB, RnfC, RnfD, RnfE and RnfG.

It is found in the cell inner membrane. Part of a membrane-bound complex that couples electron transfer with translocation of ions across the membrane. This chain is Ion-translocating oxidoreductase complex subunit E, found in Shewanella denitrificans (strain OS217 / ATCC BAA-1090 / DSM 15013).